The following is a 265-amino-acid chain: Glutamate racemase (265 aa).

Residues 13–14 (DS) and 45–46 (YG) contribute to the substrate site. Residue Cys-77 is the Proton donor/acceptor of the active site. 78 to 79 (NT) lines the substrate pocket. Cys-185 functions as the Proton donor/acceptor in the catalytic mechanism. A substrate-binding site is contributed by 186–187 (TH).

This sequence belongs to the aspartate/glutamate racemases family.

It catalyses the reaction L-glutamate = D-glutamate. It functions in the pathway cell wall biogenesis; peptidoglycan biosynthesis. In terms of biological role, provides the (R)-glutamate required for cell wall biosynthesis. In Vibrio cholerae serotype O1 (strain ATCC 39315 / El Tor Inaba N16961), this protein is Glutamate racemase.